The following is a 160-amino-acid chain: MPSFDVVSEVDKHALTNAVDQAQRLITNRFDFKGVDAKFERKEFDITITADADMQLDQMLDVLRTAMAKNGIDVSCLDISSMKTSGKQVKRDMTVRTGIDKELAKKIVALVKEKKLKVQASIQGDQVRVTGKKRDDLQECIATLRAAELGMPMQFNNFRD.

Belongs to the YajQ family.

Nucleotide-binding protein. This is Nucleotide-binding protein CJA_2652 from Cellvibrio japonicus (strain Ueda107) (Pseudomonas fluorescens subsp. cellulosa).